Here is a 1010-residue protein sequence, read N- to C-terminus: BrkA autotransporter (1010 aa).

The signal sequence occupies residues 1–42; it reads MYLDRFRQCPSSLQIPRSAWRLHALAAALALAGMARLAPAAA. The 269-residue stretch at 742–1010 folds into the Autotransporter domain; the sequence is LRADAGGPWA…SFHAGYRYSF (269 aa).

The protein resides in the periplasm. Its subcellular location is the secreted. The protein localises to the cell surface. It localises to the cell outer membrane. Its function is as follows. Inhibits the classical pathway of complement activation and prevents accumulation of deposited C4. This is BrkA autotransporter from Bordetella pertussis (strain Tohama I / ATCC BAA-589 / NCTC 13251).